A 535-amino-acid chain; its full sequence is Flavin-containing monooxygenase 2 (535 aa).

An N-acetylalanine modification is found at Ala-2. FAD-binding positions include 9–13 (GAGVS), Glu-32, 40–41 (VW), and 61–62 (NT). NADP(+)-binding positions include 60–61 (TN) and 195–198 (SGSD). A Glycyl lysine isopeptide (Lys-Gly) (interchain with G-Cter in SUMO) cross-link involves residue Lys-492. The helical transmembrane segment at 510-530 (FSVSFLLKILGLLAVVVAFFC) threads the bilayer.

It belongs to the FMO family. FAD is required as a cofactor. Mg(2+) serves as cofactor. In terms of tissue distribution, expressed in lung (at protein level). Expressed predominantly in lung, and at a much lesser extent in kidney. Also expressed in fetal lung, but not in liver, kidney and brain.

It localises to the microsome membrane. The protein localises to the endoplasmic reticulum membrane. Functionally, catalyzes the oxidative metabolism of numerous xenobiotics, including mainly therapeutic drugs and insecticides that contain a soft nucleophile, most commonly nitrogen and sulfur and participates to their bioactivation. Specifically catalyzes S-oxygenation of sulfur derived compounds such as thioureas-derived compounds, thioetherorganophosphates to their sulfenic acid. In vitro, catalyzes S-oxygenation of the second-line antitubercular drugs thiacetazone (TAZ) and ethionamide (ETA), forming a sulfinic acid and a carbodiimide via a postulated sulfenic acid intermediate. Also catalyzes S-oxygenation of the thioether-containing organophosphate insecticides, phorate and disulfoton. In Homo sapiens (Human), this protein is Flavin-containing monooxygenase 2.